A 1458-amino-acid chain; its full sequence is DNA polymerase alpha catalytic subunit (1458 aa).

Disordered regions lie at residues 1-25 (MSDS…RKEA) and 89-119 (DLED…SVSK). Over residues 15–25 (EKTEKSGRKEA) the composition is skewed to basic and acidic residues. DNA-binding stretches follow at residues 650 to 715 (RINS…VHQI) and 1241 to 1373 (QFRA…ACSK). The Zn(2+) site is built by Cys1280, Cys1283, Cys1307, Cys1312, Cys1345, Cys1350, Cys1368, and Cys1371. The CysA-type zinc finger occupies 1280–1310 (CPKCGTENIYDNVFDGSGLQIEPGLKRCSKP). Positions 1345 to 1371 (CEEKTCQNRTRRLPLSFSRNGPICQAC) match the CysB motif motif.

The protein belongs to the DNA polymerase type-B family. The DNA polymerase alpha complex is composed of four subunits: the catalytic subunit POLA1, the regulatory subunit POLA2, and the small and the large primase subunits PRIM1 and PRIM2 respectively. Interacts with PARP1; this interaction functions as part of the control of replication fork progression. Interacts with MCM10 and WDHD1; these interactions recruit the polymerase alpha complex to the pre-replicative complex bound to DNA. Interacts with RPA1; this interaction stabilizes the replicative complex and reduces the misincorporation rate of DNA polymerase alpha by acting as a fidelity clamp.

Its subcellular location is the nucleus. It catalyses the reaction DNA(n) + a 2'-deoxyribonucleoside 5'-triphosphate = DNA(n+1) + diphosphate. In terms of biological role, plays an essential role in the initiation of DNA replication. During the S phase of the cell cycle, the DNA polymerase alpha complex (composed of a catalytic subunit POLA1/p180, a regulatory subunit POLA2/p70 and two primase subunits PRIM1/p49 and PRIM2/p58) is recruited to DNA at the replicative forks via direct interactions with MCM10 and WDHD1. The primase subunit of the polymerase alpha complex initiates DNA synthesis by oligomerising short RNA primers on both leading and lagging strands. These primers are initially extended by the polymerase alpha catalytic subunit and subsequently transferred to polymerase delta and polymerase epsilon for processive synthesis on the lagging and leading strand, respectively. The reason this transfer occurs is because the polymerase alpha has limited processivity and lacks intrinsic 3' exonuclease activity for proofreading error, and therefore is not well suited for replicating long complexes. This is DNA polymerase alpha catalytic subunit (pola1) from Xenopus laevis (African clawed frog).